A 466-amino-acid chain; its full sequence is Neuronal acetylcholine receptor subunit non-alpha-3 (466 aa).

Positions 1-28 (MKLQISGLLLVTAVAYATIEAPEEFVSL) are cleaved as a signal peptide. Residues 29 to 235 (AEMEDTLLRN…VTYSFILKRL (207 aa)) are Extracellular-facing. N-linked (GlcNAc...) asparagine glycosylation is found at Asn54, Asn141, Asn169, and Asn208. A disulfide bridge links Cys156 with Cys170. A run of 3 helical transmembrane segments spans residues 236 to 260 (PLFY…VFYL), 268 to 285 (LLLS…LLVI), and 302 to 323 (YLLF…VINV). The Cytoplasmic portion of the chain corresponds to 324–438 (HHRSSATYHP…WKFVAQVLDR (115 aa)). A helical membrane pass occupies residues 439 to 456 (IFLWVFLTASVLGTILIF).

This sequence belongs to the ligand-gated ion channel (TC 1.A.9) family. Acetylcholine receptor (TC 1.A.9.1) subfamily. As to quaternary structure, neuronal AChR seems to be composed of two different type of subunits: alpha and non-alpha (beta). In terms of tissue distribution, retina, tectum and brain.

It is found in the postsynaptic cell membrane. Its subcellular location is the cell membrane. In terms of biological role, after binding acetylcholine, the AChR responds by an extensive change in conformation that affects all subunits and leads to opening of an ion-conducting channel across the plasma membrane. This Carassius auratus (Goldfish) protein is Neuronal acetylcholine receptor subunit non-alpha-3.